The following is a 437-amino-acid chain: AA9 family lytic polysaccharide monooxygenase H (437 aa).

A signal peptide spans 1 to 21; the sequence is MNLSLFTLALVACYSSQLAAA. Residue His22 coordinates Cu(2+). Cysteines 64 and 193 form a disulfide. N-linked (GlcNAc...) asparagine glycans are attached at residues Asn67 and Asn79. His104 provides a ligand contact to Cu(2+). N-linked (GlcNAc...) asparagine glycosylation is found at Asn120 and Asn138. 2 residues coordinate O2: His178 and Gln188. Tyr190 contacts Cu(2+). Asn252 and Asn307 each carry an N-linked (GlcNAc...) asparagine glycan. A Chitin-binding type-1 domain is found at 392-437; it reads DGKCGDGNGQTCKGSLLGECCSQVGYCGSSESYCGVGCQGNFGVCG. Disulfide bonds link Cys395-Cys412, Cys403-Cys418, Cys411-Cys425, and Cys429-Cys436.

The protein belongs to the polysaccharide monooxygenase AA9 family. Cu(2+) is required as a cofactor.

It localises to the secreted. The catalysed reaction is [(1-&gt;4)-beta-D-glucosyl]n+m + reduced acceptor + O2 = 4-dehydro-beta-D-glucosyl-[(1-&gt;4)-beta-D-glucosyl]n-1 + [(1-&gt;4)-beta-D-glucosyl]m + acceptor + H2O.. Lytic polysaccharide monooxygenase (LPMO) that depolymerizes crystalline and amorphous polysaccharides via the oxidation of scissile alpha- or beta-(1-4)-glycosidic bonds, yielding C1 and C4 oxidation products. Catalysis by LPMOs requires the reduction of the active-site copper from Cu(II) to Cu(I) by a reducing agent and H(2)O(2) or O(2) as a cosubstrate. The chain is AA9 family lytic polysaccharide monooxygenase H from Botryotinia fuckeliana (strain B05.10) (Noble rot fungus).